The following is a 526-amino-acid chain: Peptide chain release factor 3 (526 aa).

The region spanning 9–277 is the tr-type G domain; sequence DKRRTFAIIS…GIVEWAPKPL (269 aa). GTP is bound by residues 18-25, 86-90, and 140-143; these read SHPDAGKT, DTPGH, and NKLD.

This sequence belongs to the TRAFAC class translation factor GTPase superfamily. Classic translation factor GTPase family. PrfC subfamily.

Its subcellular location is the cytoplasm. In terms of biological role, increases the formation of ribosomal termination complexes and stimulates activities of RF-1 and RF-2. It binds guanine nucleotides and has strong preference for UGA stop codons. It may interact directly with the ribosome. The stimulation of RF-1 and RF-2 is significantly reduced by GTP and GDP, but not by GMP. The protein is Peptide chain release factor 3 of Shewanella putrefaciens (strain CN-32 / ATCC BAA-453).